The sequence spans 155 residues: Molybdopterin synthase catalytic subunit 1 (155 aa).

Substrate contacts are provided by residues 101 to 102, K117, and 124 to 126; these read HR and KKE.

The protein belongs to the MoaE family. MOCS2B subfamily. In terms of assembly, heterotetramer; composed of 2 small (MOCS2A) and 2 large (MOCS2B) subunits.

It localises to the cytoplasm. It catalyses the reaction 2 [molybdopterin-synthase sulfur-carrier protein]-C-terminal-Gly-aminoethanethioate + cyclic pyranopterin phosphate + H2O = molybdopterin + 2 [molybdopterin-synthase sulfur-carrier protein]-C-terminal Gly-Gly + 2 H(+). It functions in the pathway cofactor biosynthesis; molybdopterin biosynthesis. Functionally, catalytic subunit of the molybdopterin synthase complex, a complex that catalyzes the conversion of precursor Z into molybdopterin. Acts by mediating the incorporation of 2 sulfur atoms from thiocarboxylated MOCS2A into precursor Z to generate a dithiolene group. In Aedes aegypti (Yellowfever mosquito), this protein is Molybdopterin synthase catalytic subunit 1.